Consider the following 869-residue polypeptide: DNA mismatch repair protein MutS (869 aa).

Gly618 to Ser625 serves as a coordination point for ATP.

This sequence belongs to the DNA mismatch repair MutS family.

Its function is as follows. This protein is involved in the repair of mismatches in DNA. It is possible that it carries out the mismatch recognition step. This protein has a weak ATPase activity. The polypeptide is DNA mismatch repair protein MutS (Zymomonas mobilis subsp. mobilis (strain ATCC 31821 / ZM4 / CP4)).